The primary structure comprises 348 residues: Protein pelota homolog (348 aa).

The protein belongs to the eukaryotic release factor 1 family. Pelota subfamily. Monomer. A divalent metal cation serves as cofactor.

It localises to the cytoplasm. May function in recognizing stalled ribosomes, interact with stem-loop structures in stalled mRNA molecules, and effect endonucleolytic cleavage of the mRNA. May play a role in the release non-functional ribosomes and degradation of damaged mRNAs. Has endoribonuclease activity. In Methanococcus maripaludis (strain C5 / ATCC BAA-1333), this protein is Protein pelota homolog.